A 202-amino-acid chain; its full sequence is LexA repressor (202 aa).

Residues 29–49 constitute a DNA-binding region (H-T-H motif); the sequence is VREICEATGLKSTSTVHGHLT. Residues S126 and K163 each act as for autocatalytic cleavage activity in the active site.

The protein belongs to the peptidase S24 family. In terms of assembly, homodimer.

The enzyme catalyses Hydrolysis of Ala-|-Gly bond in repressor LexA.. Its function is as follows. Represses a number of genes involved in the response to DNA damage (SOS response), including recA and lexA. In the presence of single-stranded DNA, RecA interacts with LexA causing an autocatalytic cleavage which disrupts the DNA-binding part of LexA, leading to derepression of the SOS regulon and eventually DNA repair. This is LexA repressor from Caldicellulosiruptor saccharolyticus (strain ATCC 43494 / DSM 8903 / Tp8T 6331).